The following is a 140-amino-acid chain: MSRFLNVLRSWLVMVSIIAMGNTLQSFRDHTFLYEKLYTGKPNLVNGLQARTFGIWTLLSSVIRCLCAIDIHNKTLYHITLWTFLLALGHFLSELFVYGTAAPTIGVLAPLMVASFSILGMLVGLRYLEVEPVSRQKKRN.

Helical transmembrane passes span 4–24, 52–72, 79–99, and 105–125; these read FLNVLRSWLVMVSIIAMGNTL, TFGIWTLLSSVIRCLCAIDIH, ITLWTFLLALGHFLSELFVYG, and IGVLAPLMVASFSILGMLVGL.

Belongs to the ERG28 family. In terms of tissue distribution, ubiquitous; strongly expressed in testis and some cancer cell lines.

It localises to the endoplasmic reticulum membrane. This chain is Ergosterol biosynthetic protein 28 homolog, found in Homo sapiens (Human).